A 245-amino-acid polypeptide reads, in one-letter code: 1-(5-phosphoribosyl)-5-[(5-phosphoribosylamino)methylideneamino] imidazole-4-carboxamide isomerase (245 aa).

Asp-8 (proton acceptor) is an active-site residue. Residue Asp-130 is the Proton donor of the active site.

Belongs to the HisA/HisF family.

It is found in the cytoplasm. It catalyses the reaction 1-(5-phospho-beta-D-ribosyl)-5-[(5-phospho-beta-D-ribosylamino)methylideneamino]imidazole-4-carboxamide = 5-[(5-phospho-1-deoxy-D-ribulos-1-ylimino)methylamino]-1-(5-phospho-beta-D-ribosyl)imidazole-4-carboxamide. The protein operates within amino-acid biosynthesis; L-histidine biosynthesis; L-histidine from 5-phospho-alpha-D-ribose 1-diphosphate: step 4/9. The chain is 1-(5-phosphoribosyl)-5-[(5-phosphoribosylamino)methylideneamino] imidazole-4-carboxamide isomerase from Pseudomonas aeruginosa (strain LESB58).